Consider the following 231-residue polypeptide: L-ribulose-5-phosphate 4-epimerase AraD (231 aa).

Substrate-binding positions include 27–28, 44–45, and 74–75; these read GN, SG, and SS. The Zn(2+) site is built by Asp-76, His-95, and His-97. The active-site Proton donor/acceptor is Asp-120. His-171 contacts Zn(2+). Tyr-229 serves as the catalytic Proton donor/acceptor.

The protein belongs to the aldolase class II family. AraD/FucA subfamily. Homotetramer. It depends on Zn(2+) as a cofactor.

It catalyses the reaction L-ribulose 5-phosphate = D-xylulose 5-phosphate. Its pathway is carbohydrate degradation; L-arabinose degradation via L-ribulose; D-xylulose 5-phosphate from L-arabinose (bacterial route): step 3/3. Its activity is regulated as follows. Inhibited by glycolohydroxamate at concentration above 0.1 mM. Its function is as follows. Involved in the degradation of L-arabinose. Catalyzes the interconversion of L-ribulose 5-phosphate (LRu5P) and D-xylulose 5-phosphate (D-Xu5P) via a retroaldol/aldol mechanism (carbon-carbon bond cleavage analogous to a class II aldolase reaction). The protein is L-ribulose-5-phosphate 4-epimerase AraD of Escherichia coli (strain K12).